The primary structure comprises 169 residues: MAQGDDNKQAIGQIIRQEQALIFPSLDENDAFSLGQRIRDIAVKDKLGIAIDISLWGRRLFFAATAGATADNTEWLRRKFNVVRRFHVSTYRLVLEQNREDRMFAPYKALDVADYALAGGGFPIRVSGAGVIGAVIVSGLPQREDHNLVVRAVAEHVGQDPVALALPAA.

The protein belongs to the UPF0303 family.

This chain is UPF0303 protein BMEI0598, found in Brucella melitensis biotype 1 (strain ATCC 23456 / CCUG 17765 / NCTC 10094 / 16M).